A 213-amino-acid chain; its full sequence is Pyridoxine/pyridoxamine 5'-phosphate oxidase (213 aa).

Residues 8-11 (RREY) and Lys67 contribute to the substrate site. FMN-binding positions include 62–67 (RIVLLK), 77–78 (FT), Arg83, Lys84, and Gln106. The substrate site is built by Tyr124, Arg128, and Ser132. Residues 141 to 142 (QS) and Trp186 each bind FMN. 192–194 (RLH) is a binding site for substrate. Arg196 is a binding site for FMN.

This sequence belongs to the pyridoxamine 5'-phosphate oxidase family. In terms of assembly, homodimer. FMN serves as cofactor.

The catalysed reaction is pyridoxamine 5'-phosphate + O2 + H2O = pyridoxal 5'-phosphate + H2O2 + NH4(+). It catalyses the reaction pyridoxine 5'-phosphate + O2 = pyridoxal 5'-phosphate + H2O2. Its pathway is cofactor metabolism; pyridoxal 5'-phosphate salvage; pyridoxal 5'-phosphate from pyridoxamine 5'-phosphate: step 1/1. The protein operates within cofactor metabolism; pyridoxal 5'-phosphate salvage; pyridoxal 5'-phosphate from pyridoxine 5'-phosphate: step 1/1. Catalyzes the oxidation of either pyridoxine 5'-phosphate (PNP) or pyridoxamine 5'-phosphate (PMP) into pyridoxal 5'-phosphate (PLP). This Shewanella woodyi (strain ATCC 51908 / MS32) protein is Pyridoxine/pyridoxamine 5'-phosphate oxidase.